A 255-amino-acid chain; its full sequence is Probable sulfate transport system permease protein cysT (255 aa).

Helical transmembrane passes span 2–22 (LGNH…SLIL), 48–68 (MALI…WVIT), 77–97 (FIDA…GLTL), 118–138 (IIYT…PFVI), 167–187 (FLRV…TLSF), 195–215 (GSVV…SVLI), and 225–245 (FGAS…IFLI). The 205-residue stretch at 42–246 (YGFTIKMALI…IALLIIFLIN (205 aa)) folds into the ABC transmembrane type-1 domain.

Belongs to the binding-protein-dependent transport system permease family. CysTW subfamily.

It localises to the plastid membrane. Part of the ABC transporter complex cysAWTP (TC 3.A.1.6.1) involved in sulfate/thiosulfate import. Probably responsible for the translocation of the substrate across the membrane. This is Probable sulfate transport system permease protein cysT (cysT) from Prototheca wickerhamii.